The following is a 290-amino-acid chain: Ribosomal RNA small subunit methyltransferase A (290 aa).

S-adenosyl-L-methionine is bound by residues Asn-27, Leu-29, Gly-54, Glu-75, Asp-100, and Asn-125.

Belongs to the class I-like SAM-binding methyltransferase superfamily. rRNA adenine N(6)-methyltransferase family. RsmA subfamily.

The protein resides in the cytoplasm. The catalysed reaction is adenosine(1518)/adenosine(1519) in 16S rRNA + 4 S-adenosyl-L-methionine = N(6)-dimethyladenosine(1518)/N(6)-dimethyladenosine(1519) in 16S rRNA + 4 S-adenosyl-L-homocysteine + 4 H(+). Specifically dimethylates two adjacent adenosines (A1518 and A1519) in the loop of a conserved hairpin near the 3'-end of 16S rRNA in the 30S particle. May play a critical role in biogenesis of 30S subunits. The sequence is that of Ribosomal RNA small subunit methyltransferase A from Streptococcus thermophilus (strain ATCC BAA-491 / LMD-9).